Consider the following 315-residue polypeptide: Methionyl-tRNA formyltransferase (315 aa).

A (6S)-5,6,7,8-tetrahydrofolate-binding site is contributed by Ser113 to Pro116.

This sequence belongs to the Fmt family.

The catalysed reaction is L-methionyl-tRNA(fMet) + (6R)-10-formyltetrahydrofolate = N-formyl-L-methionyl-tRNA(fMet) + (6S)-5,6,7,8-tetrahydrofolate + H(+). Attaches a formyl group to the free amino group of methionyl-tRNA(fMet). The formyl group appears to play a dual role in the initiator identity of N-formylmethionyl-tRNA by promoting its recognition by IF2 and preventing the misappropriation of this tRNA by the elongation apparatus. The sequence is that of Methionyl-tRNA formyltransferase from Cronobacter sakazakii (strain ATCC BAA-894) (Enterobacter sakazakii).